We begin with the raw amino-acid sequence, 136 residues long: Small ribosomal subunit protein bS16 (136 aa).

Residues 114–123 (TLKARRRRAK) are compositionally biased toward basic residues. The segment at 114–136 (TLKARRRRAKKEAEAASASSAEG) is disordered.

Belongs to the bacterial ribosomal protein bS16 family.

The chain is Small ribosomal subunit protein bS16 from Chlorobium chlorochromatii (strain CaD3).